The chain runs to 341 residues: L-threonine 3-dehydrogenase (341 aa).

Cys-38 lines the Zn(2+) pocket. Active-site charge relay system residues include Thr-40 and His-43. 6 residues coordinate Zn(2+): His-63, Glu-64, Cys-93, Cys-96, Cys-99, and Cys-107. NAD(+) is bound by residues Ile-175, Asp-195, Arg-200, 262–264, and 286–287; these read LGI and IY.

It belongs to the zinc-containing alcohol dehydrogenase family. Homotetramer. Zn(2+) is required as a cofactor.

The protein localises to the cytoplasm. The catalysed reaction is L-threonine + NAD(+) = (2S)-2-amino-3-oxobutanoate + NADH + H(+). It participates in amino-acid degradation; L-threonine degradation via oxydo-reductase pathway; glycine from L-threonine: step 1/2. Catalyzes the NAD(+)-dependent oxidation of L-threonine to 2-amino-3-ketobutyrate. This chain is L-threonine 3-dehydrogenase, found in Shewanella sediminis (strain HAW-EB3).